A 120-amino-acid chain; its full sequence is Large ribosomal subunit protein eL18 (120 aa).

The protein belongs to the eukaryotic ribosomal protein eL18 family.

In Methanococcus maripaludis (strain DSM 14266 / JCM 13030 / NBRC 101832 / S2 / LL), this protein is Large ribosomal subunit protein eL18.